Consider the following 428-residue polypeptide: UDP-N-acetylglucosamine 1-carboxyvinyltransferase 2 (428 aa).

A phosphoenolpyruvate-binding site is contributed by 22–23 (KN). UDP-N-acetyl-alpha-D-glucosamine is bound at residue Arg-92. Cys-116 acts as the Proton donor in catalysis. Residue Cys-116 is modified to 2-(S-cysteinyl)pyruvic acid O-phosphothioketal. UDP-N-acetyl-alpha-D-glucosamine-binding positions include 121–125 (RPIDQ), Asp-304, and Ile-326.

It belongs to the EPSP synthase family. MurA subfamily.

It localises to the cytoplasm. The catalysed reaction is phosphoenolpyruvate + UDP-N-acetyl-alpha-D-glucosamine = UDP-N-acetyl-3-O-(1-carboxyvinyl)-alpha-D-glucosamine + phosphate. The protein operates within cell wall biogenesis; peptidoglycan biosynthesis. Functionally, cell wall formation. Adds enolpyruvyl to UDP-N-acetylglucosamine. This Shouchella clausii (strain KSM-K16) (Alkalihalobacillus clausii) protein is UDP-N-acetylglucosamine 1-carboxyvinyltransferase 2.